A 585-amino-acid chain; its full sequence is Protein-lysine N-methyltransferase EFM1 (585 aa).

One can recognise an SET domain in the interval 23–281 (PKISFRITED…AQDELFNNYG (259 aa)). Tyr-280 contacts S-adenosyl-L-methionine.

Belongs to the class V-like SAM-binding methyltransferase superfamily. RKM1 family.

Its subcellular location is the cytoplasm. In terms of biological role, S-adenosyl-L-methionine-dependent protein-lysine N-methyltransferase that monomethylates elongation factor 1-alpha (TEF1/TEF2) at 'Lys-30'. This chain is Protein-lysine N-methyltransferase EFM1, found in Saccharomyces cerevisiae (strain ATCC 204508 / S288c) (Baker's yeast).